Reading from the N-terminus, the 30-residue chain is V-type proton ATPase catalytic subunit A isoform 1 (30 aa).

This sequence belongs to the ATPase alpha/beta chains family. In terms of assembly, V-ATPase is a heteromultimeric enzyme composed of a peripheral catalytic V1 complex (main components: subunits A, B, C, D, E, and F) attached to an integral membrane V0 proton pore complex (main component: the proteolipid protein).

It carries out the reaction ATP + H2O + 4 H(+)(in) = ADP + phosphate + 5 H(+)(out). In terms of biological role, catalytic subunit of the peripheral V1 complex of vacuolar ATPase. V-ATPase vacuolar ATPase is responsible for acidifying a variety of intracellular compartments in eukaryotic cells. The polypeptide is V-type proton ATPase catalytic subunit A isoform 1 (Equisetum arvense (Field horsetail)).